We begin with the raw amino-acid sequence, 239 residues long: Purine nucleoside phosphorylase DeoD-type (239 aa).

H5 lines the a purine D-ribonucleoside pocket. Phosphate contacts are provided by residues G21, R25, R44, and 88–91 (RVGS). A purine D-ribonucleoside is bound by residues 180–182 (EME) and 204–205 (SD). Catalysis depends on D205, which acts as the Proton donor.

The protein belongs to the PNP/UDP phosphorylase family. As to quaternary structure, homohexamer; trimer of homodimers.

It catalyses the reaction a purine D-ribonucleoside + phosphate = a purine nucleobase + alpha-D-ribose 1-phosphate. The enzyme catalyses a purine 2'-deoxy-D-ribonucleoside + phosphate = a purine nucleobase + 2-deoxy-alpha-D-ribose 1-phosphate. Catalyzes the reversible phosphorolytic breakdown of the N-glycosidic bond in the beta-(deoxy)ribonucleoside molecules, with the formation of the corresponding free purine bases and pentose-1-phosphate. This chain is Purine nucleoside phosphorylase DeoD-type, found in Cronobacter sakazakii (strain ATCC BAA-894) (Enterobacter sakazakii).